Reading from the N-terminus, the 147-residue chain is uncharacterized protein (147 aa).

This is an uncharacterized protein from Escherichia coli (strain K12).